The sequence spans 270 residues: MLGLQIITLLFIPTLLYAYELEPLERTETPLEKELGYWCTYANHCSFCWDCQDGICRNKAFKNHSPILENDYIANCSVYRRNDFCIYYITSIKPHKIYRTECSEHLSHEWHEAVIRKWQKLLTYGFYLVGCVLVVNYIRKRSLQTIVYLLVLLVIFFLLSQLMLYRELEDKKHKTGSIPPERELEHWCTHGKYCNFCWDCQNGICRNKVFKNHPPIGENDFIRYDCWTTHLLNKCYYEKIYKHFNTHIMECSQPTHFKWYDNLMKKQDIM.

Residues 1–26 (MLGLQIITLLFIPTLLYAYELEPLER) form the signal peptide. The A repeat unit spans residues 1–146 (MLGLQIITLL…YIRKRSLQTI (146 aa)). The N-linked (GlcNAc...) asparagine; by host glycan is linked to Asn75. The next 2 membrane-spanning stretches (helical) occupy residues 118–138 (WQKL…VNYI) and 146–166 (IVYL…MLYR). Residues 147–270 (VYLLVLLVIF…DNLMKKQDIM (124 aa)) form a B repeat.

Belongs to the asfivirus MGF 110 family.

Its subcellular location is the membrane. In terms of biological role, plays a role in virus cell tropism, and may be required for efficient virus replication in macrophages. The protein is Protein MGF 110-1L of Ornithodoros (relapsing fever ticks).